Here is a 393-residue protein sequence, read N- to C-terminus: Formate-dependent phosphoribosylglycinamide formyltransferase (393 aa).

N(1)-(5-phospho-beta-D-ribosyl)glycinamide contacts are provided by residues 22–23 (EL) and glutamate 82. ATP is bound by residues arginine 114, lysine 155, 160–165 (SSGKGQ), 195–198 (EGFI), and glutamate 203. Residues 119 to 308 (RLAAEELDLP…QFALHARAIL (190 aa)) form the ATP-grasp domain. 2 residues coordinate Mg(2+): glutamate 267 and glutamate 279. Residues aspartate 286, lysine 356, and 363–364 (RR) contribute to the N(1)-(5-phospho-beta-D-ribosyl)glycinamide site.

It belongs to the PurK/PurT family. As to quaternary structure, homodimer.

The catalysed reaction is N(1)-(5-phospho-beta-D-ribosyl)glycinamide + formate + ATP = N(2)-formyl-N(1)-(5-phospho-beta-D-ribosyl)glycinamide + ADP + phosphate + H(+). The protein operates within purine metabolism; IMP biosynthesis via de novo pathway; N(2)-formyl-N(1)-(5-phospho-D-ribosyl)glycinamide from N(1)-(5-phospho-D-ribosyl)glycinamide (formate route): step 1/1. Functionally, involved in the de novo purine biosynthesis. Catalyzes the transfer of formate to 5-phospho-ribosyl-glycinamide (GAR), producing 5-phospho-ribosyl-N-formylglycinamide (FGAR). Formate is provided by PurU via hydrolysis of 10-formyl-tetrahydrofolate. The polypeptide is Formate-dependent phosphoribosylglycinamide formyltransferase (Pseudomonas fluorescens (strain Pf0-1)).